The primary structure comprises 119 residues: Ribosome-binding factor A (119 aa).

Belongs to the RbfA family. As to quaternary structure, monomer. Binds 30S ribosomal subunits, but not 50S ribosomal subunits or 70S ribosomes.

Its subcellular location is the cytoplasm. One of several proteins that assist in the late maturation steps of the functional core of the 30S ribosomal subunit. Associates with free 30S ribosomal subunits (but not with 30S subunits that are part of 70S ribosomes or polysomes). Required for efficient processing of 16S rRNA. May interact with the 5'-terminal helix region of 16S rRNA. The protein is Ribosome-binding factor A of Limosilactobacillus reuteri (strain DSM 20016) (Lactobacillus reuteri).